Here is a 408-residue protein sequence, read N- to C-terminus: Na(+)-translocating NADH-quinone reductase subunit F (408 aa).

A helical membrane pass occupies residues 6-26 (IILGVVMFTAIVLALVAIILA). The 2Fe-2S ferredoxin-type domain maps to 35–127 (GDVTIRINGE…DMDVEVPEEV (93 aa)). Cys-70, Cys-76, Cys-79, and Cys-111 together coordinate [2Fe-2S] cluster. The region spanning 130-270 (VKAWECTVES…YGPFGEFFAK (141 aa)) is the FAD-binding FR-type domain.

This sequence belongs to the NqrF family. Composed of six subunits; NqrA, NqrB, NqrC, NqrD, NqrE and NqrF. It depends on [2Fe-2S] cluster as a cofactor. FAD is required as a cofactor.

The protein localises to the cell inner membrane. The catalysed reaction is a ubiquinone + n Na(+)(in) + NADH + H(+) = a ubiquinol + n Na(+)(out) + NAD(+). NQR complex catalyzes the reduction of ubiquinone-1 to ubiquinol by two successive reactions, coupled with the transport of Na(+) ions from the cytoplasm to the periplasm. The first step is catalyzed by NqrF, which accepts electrons from NADH and reduces ubiquinone-1 to ubisemiquinone by a one-electron transfer pathway. This is Na(+)-translocating NADH-quinone reductase subunit F from Marinomonas sp. (strain MWYL1).